A 284-amino-acid polypeptide reads, in one-letter code: Tropomyosin alpha-1 chain (284 aa).

M1 bears the N-acetylmethionine mark. A disordered region spans residues 1 to 38 (MDAIKKKMQMLKLDKENALDRAEQAEADKKAAEDRSKQ). Positions 1–284 (MDAIKKKMQM…DHALNDMTSI (284 aa)) form a coiled coil. Basic and acidic residues predominate over residues 12 to 38 (KLDKENALDRAEQAEADKKAAEDRSKQ). 3 positions are modified to phosphoserine: A31, S45, and K51. The segment at 116 to 136 (AEKAADESERGMKVIESRAQK) is disordered. Phosphoserine occurs at positions 174, 186, and 206. The residue at position 213 (K213) is an N6-acetyllysine. S252 carries the phosphoserine modification. A Phosphotyrosine modification is found at Y261. A Phosphoserine modification is found at S271. The residue at position 283 (S283) is a Phosphoserine; by DAPK1.

The protein belongs to the tropomyosin family. As to quaternary structure, homodimer. Heterodimer of an alpha (TPM1, TPM3 or TPM4) and a beta (TPM2) chain. Interacts with HRG (via the HRR domain); the interaction contributes to the antiangiogenic properties of the histidine/proline-rich region (HRR) of HRG. Interacts (via N-terminus) with LMOD2 (via N-terminus) and TMOD1 (via N-terminus). In terms of processing, phosphorylated at Ser-283 by DAPK1 in response to oxidative stress and this phosphorylation enhances stress fiber formation in endothelial cells. As to expression, detected in primary breast cancer tissues but undetectable in normal breast tissues in Sudanese patients. Isoform 1 is expressed in adult and fetal skeletal muscle and cardiac tissues, with higher expression levels in the cardiac tissues. Isoform 10 is expressed in adult and fetal cardiac tissues, but not in skeletal muscle.

It is found in the cytoplasm. The protein localises to the cytoskeleton. Functionally, binds to actin filaments in muscle and non-muscle cells. Plays a central role, in association with the troponin complex, in the calcium dependent regulation of vertebrate striated muscle contraction. Smooth muscle contraction is regulated by interaction with caldesmon. In non-muscle cells is implicated in stabilizing cytoskeleton actin filaments. This chain is Tropomyosin alpha-1 chain (TPM1), found in Homo sapiens (Human).